The chain runs to 202 residues: LexA repressor (202 aa).

The H-T-H motif DNA-binding region spans 28–48 (RAEIAQELGFKSPNAAEEHLK). Residues Ser123 and Lys160 each act as for autocatalytic cleavage activity in the active site.

It belongs to the peptidase S24 family. As to quaternary structure, homodimer.

It carries out the reaction Hydrolysis of Ala-|-Gly bond in repressor LexA.. Functionally, represses a number of genes involved in the response to DNA damage (SOS response), including recA and lexA. In the presence of single-stranded DNA, RecA interacts with LexA causing an autocatalytic cleavage which disrupts the DNA-binding part of LexA, leading to derepression of the SOS regulon and eventually DNA repair. This chain is LexA repressor, found in Pseudomonas putida (Arthrobacter siderocapsulatus).